A 104-amino-acid polypeptide reads, in one-letter code: Ig lambda-2 chain C region (104 aa).

In terms of domain architecture, Ig-like spans Pro-6 to Ser-99. The cysteines at positions 27 and 85 are disulfide-linked.

The protein is Ig lambda-2 chain C region (Iglc2) of Mus musculus (Mouse).